A 350-amino-acid chain; its full sequence is MSKIRVLSVDDSALMRQIMTEIINSHSDMEMVATAPDPLVARDLIKKYNPDVLTLDVEMPRMDGIDFLEKLMRLRPMPVVMVSSLTGKGSEITLRALELGAVDFVTKPQLGIREGMLAYSEMIAEKIRHPSRAKLAAHTPLAAPDTLKAGPLLSSEKLLVIGASTGGTEAIRHVLQPLPLSSPGILITQHMPPGFTRSFAERLNKLCQISVKEAEDGERVPPGHAYIAPGDKHMELSRRRANYQIKIHDGPPVNRHRPSVDVLFHSVAKHAGRNAVGVILTGMGNDGAAGMLAMPIAGAWTIAQNEASCVVFGMPREAINMGGVSEVVDLSQVVSQQMLEKISAGQAIRI.

The 118-residue stretch at 5-122 folds into the Response regulatory domain; it reads RVLSVDDSAL…REGMLAYSEM (118 aa). Asp56 carries the 4-aspartylphosphate modification. The CheB-type methylesterase domain occupies 152–338; that stretch reads LLSSEKLLVI…DLSQVVSQQM (187 aa). Active-site residues include Ser164, His190, and Asp286.

Belongs to the CheB family. In terms of processing, phosphorylated by CheA. Phosphorylation of the N-terminal regulatory domain activates the methylesterase activity.

The protein resides in the cytoplasm. It carries out the reaction [protein]-L-glutamate 5-O-methyl ester + H2O = L-glutamyl-[protein] + methanol + H(+). It catalyses the reaction L-glutaminyl-[protein] + H2O = L-glutamyl-[protein] + NH4(+). Its function is as follows. Involved in chemotaxis. Part of a chemotaxis signal transduction system that modulates chemotaxis in response to various stimuli. Catalyzes the demethylation of specific methylglutamate residues introduced into the chemoreceptors (methyl-accepting chemotaxis proteins or MCP) by CheR. Also mediates the irreversible deamidation of specific glutamine residues to glutamic acid. The polypeptide is Protein-glutamate methylesterase/protein-glutamine glutaminase (Enterobacter cloacae).